The following is a 357-amino-acid chain: UDP-N-acetylglucosamine--N-acetylmuramyl-(pentapeptide) pyrophosphoryl-undecaprenol N-acetylglucosamine transferase (357 aa).

Residues threonine 15–glycine 17, asparagine 123, arginine 164, serine 190, and glutamine 284 each bind UDP-N-acetyl-alpha-D-glucosamine.

This sequence belongs to the glycosyltransferase 28 family. MurG subfamily.

The protein localises to the cell inner membrane. The catalysed reaction is di-trans,octa-cis-undecaprenyl diphospho-N-acetyl-alpha-D-muramoyl-L-alanyl-D-glutamyl-meso-2,6-diaminopimeloyl-D-alanyl-D-alanine + UDP-N-acetyl-alpha-D-glucosamine = di-trans,octa-cis-undecaprenyl diphospho-[N-acetyl-alpha-D-glucosaminyl-(1-&gt;4)]-N-acetyl-alpha-D-muramoyl-L-alanyl-D-glutamyl-meso-2,6-diaminopimeloyl-D-alanyl-D-alanine + UDP + H(+). The protein operates within cell wall biogenesis; peptidoglycan biosynthesis. Cell wall formation. Catalyzes the transfer of a GlcNAc subunit on undecaprenyl-pyrophosphoryl-MurNAc-pentapeptide (lipid intermediate I) to form undecaprenyl-pyrophosphoryl-MurNAc-(pentapeptide)GlcNAc (lipid intermediate II). This chain is UDP-N-acetylglucosamine--N-acetylmuramyl-(pentapeptide) pyrophosphoryl-undecaprenol N-acetylglucosamine transferase, found in Synechococcus elongatus (strain ATCC 33912 / PCC 7942 / FACHB-805) (Anacystis nidulans R2).